The sequence spans 330 residues: L-lactate dehydrogenase (330 aa).

Residues Val31, Asp52, Lys57, and 96–97 (GA) each bind NAD(+). Substrate contacts are provided by residues Gln99, Arg105, and 137–140 (NPVD). Residues 135–137 (VSN) and Ser160 contribute to the NAD(+) site. Position 165-168 (165-168 (DTAR)) interacts with substrate. Residues Arg170 and His185 each contribute to the beta-D-fructose 1,6-bisphosphate site. His192 acts as the Proton acceptor in catalysis. The residue at position 238 (Tyr238) is a Phosphotyrosine. Position 247 (Thr247) interacts with substrate.

Belongs to the LDH/MDH superfamily. LDH family. In terms of assembly, homotetramer.

It is found in the cytoplasm. It carries out the reaction (S)-lactate + NAD(+) = pyruvate + NADH + H(+). The protein operates within fermentation; pyruvate fermentation to lactate; (S)-lactate from pyruvate: step 1/1. Allosterically activated by fructose 1,6-bisphosphate (FBP). In terms of biological role, catalyzes the conversion of lactate to pyruvate. In Gloeobacter violaceus (strain ATCC 29082 / PCC 7421), this protein is L-lactate dehydrogenase.